Reading from the N-terminus, the 110-residue chain is uncharacterized protein (110 aa).

This is an uncharacterized protein from Sulfolobus islandicus rod-shaped virus 1 (SIRV-1).